An 87-amino-acid polypeptide reads, in one-letter code: Large ribosomal subunit protein bL27 (87 aa).

Residues 1–25 are disordered; that stretch reads MAHKKGASSSRNGRDSNAQRLGVKR. Residues 7–19 are compositionally biased toward polar residues; the sequence is ASSSRNGRDSNAQ.

This sequence belongs to the bacterial ribosomal protein bL27 family.

This is Large ribosomal subunit protein bL27 from Rhodococcus jostii (strain RHA1).